Reading from the N-terminus, the 196-residue chain is ATP-dependent Clp protease proteolytic subunit (196 aa).

Catalysis depends on Ser-99, which acts as the Nucleophile. His-124 is an active-site residue.

It belongs to the peptidase S14 family. Fourteen ClpP subunits assemble into 2 heptameric rings which stack back to back to give a disk-like structure with a central cavity, resembling the structure of eukaryotic proteasomes.

It is found in the cytoplasm. It catalyses the reaction Hydrolysis of proteins to small peptides in the presence of ATP and magnesium. alpha-casein is the usual test substrate. In the absence of ATP, only oligopeptides shorter than five residues are hydrolyzed (such as succinyl-Leu-Tyr-|-NHMec, and Leu-Tyr-Leu-|-Tyr-Trp, in which cleavage of the -Tyr-|-Leu- and -Tyr-|-Trp bonds also occurs).. In terms of biological role, cleaves peptides in various proteins in a process that requires ATP hydrolysis. Has a chymotrypsin-like activity. Plays a major role in the degradation of misfolded proteins. This Helicobacter pylori (strain ATCC 700392 / 26695) (Campylobacter pylori) protein is ATP-dependent Clp protease proteolytic subunit.